The chain runs to 386 residues: D-amino-acid oxidase (386 aa).

Glycine 14, glycine 15, valine 16, valine 17, glutamate 39, arginine 40, alanine 51, glycine 52, and glycine 53 together coordinate FAD. The tract at residues 109–138 (SSSPPHPLLPPWVDPSASAAPPRELGTPDT) is disordered. Positions 112 to 121 (PPHPLLPPWV) are enriched in pro residues. Arginine 174, valine 175, and alanine 176 together coordinate FAD. Positions 253, 261, and 332 each coordinate D-serine. 2 residues coordinate D-proline: tyrosine 261 and lysine 332. Positions 332, 344, 345, 362, and 364 each coordinate FAD. Lysine 332 is a binding site for D-dopa. D-serine is bound at residue glycine 362. A D-proline-binding site is contributed by glycine 362. Glycine 362 lines the D-dopa pocket.

It belongs to the DAMOX/DASOX family.

The enzyme catalyses a D-alpha-amino acid + O2 + H2O = a 2-oxocarboxylate + H2O2 + NH4(+). It catalyses the reaction D-alanine + O2 + H2O = pyruvate + H2O2 + NH4(+). It carries out the reaction D-aspartate + O2 + H2O = oxaloacetate + H2O2 + NH4(+). Its function is as follows. Catalyzes the oxidative deamination of D-amino acids with broad substrate specificity. Enables the organism to utilize D-amino acids as a source of nutrients. The protein is D-amino-acid oxidase of Zea mays (Maize).